The primary structure comprises 77 residues: Protein NS4 (77 aa).

Its subcellular location is the host cytoplasm. The protein localises to the host nucleus. The protein resides in the host nucleolus. Functionally, may function as a nucleic acid binding protein that modulates transcription of genes participating in the IFN response. The protein is Protein NS4 (Segment-9) of Antilocapra americana (Pronghorn).